We begin with the raw amino-acid sequence, 935 residues long: UvrABC system protein A (935 aa).

31 to 38 (GLSGSGKS) lines the ATP pocket. Residues 254–281 (CFKCKMSFEELEPLSFSFNSPKGACESC) form a C4-type zinc finger. ABC transporter domains are found at residues 310–579 (IFGY…NNHS) and 599–931 (KEKH…KFLA). 631 to 638 (GVSGSGKS) contributes to the ATP binding site. Residues 731–757 (CEKCQGDGDIKIEMHFLPDVLVQCDSC) form a C4-type zinc finger.

The protein belongs to the ABC transporter superfamily. UvrA family. Forms a heterotetramer with UvrB during the search for lesions.

The protein resides in the cytoplasm. Its function is as follows. The UvrABC repair system catalyzes the recognition and processing of DNA lesions. UvrA is an ATPase and a DNA-binding protein. A damage recognition complex composed of 2 UvrA and 2 UvrB subunits scans DNA for abnormalities. When the presence of a lesion has been verified by UvrB, the UvrA molecules dissociate. The sequence is that of UvrABC system protein A from Helicobacter pylori (strain ATCC 700392 / 26695) (Campylobacter pylori).